The primary structure comprises 594 residues: MASGANVTDNKQQTPQESDTLKRVWAYLKPEKRNFVLAIIAMGLVAASEGIIPKVVNDLLDKGFGGSYAGKLWHVPALLVGVALVRGLAQFASGYLLSQISNGVLLKMRMQMFDRMLHAPALFFHRNTAASLINAVIFEVNQVMQILTGVLITLVRDSLTVVALLIYLFYTNWKLTLVVAVLLPAIGFVMSKVNRRLRRLNREHQALTNTAAYVVEESVGGFKVVKLHGGEAYEMSRFEAMAERLRGYSMRMAVAGGLNQPVTAFLASLALSVILTIAMIQAQGNQTTIGGFTGFVMAMLLLISPLKHLADLNQPLQRGLTAAEMIFGLIDEPIEPQNGGLPLERARGDLVFDNVGFRYGDAARAALNHVSLRAAPGEVVALVGPSGSGKTTLVNLVPRFFDPTEGHILLDGQPIDRFALADLRRQIAFVSQDVVLFNDTVAANVAYGVHPREKIDMARVERALAAAYLTDVVKGLPEGLETNIGDNGMKLSGGQRQRLAIARAIYKDAPILILDEATSALDSESERQVQAALESLMVGRTTLVIAHRLSTIENADRIVVLEQGRVAEQGSHAELIGKNGLYAGLHRIQFASQA.

Transmembrane regions (helical) follow at residues 35-55, 64-84, 135-155, 161-181, 262-282, and 289-309; these read FVLAIIAMGLVAASEGIIPKV, FGGSYAGKLWHVPALLVGVAL, AVIFEVNQVMQILTGVLITLV, VVALLIYLFYTNWKLTLVVAV, VTAFLASLALSVILTIAMIQA, and IGGFTGFVMAMLLLISPLKHL. Positions 36–318 constitute an ABC transmembrane type-1 domain; the sequence is VLAIIAMGLV…LADLNQPLQR (283 aa). Residues 350-588 enclose the ABC transporter domain; it reads LVFDNVGFRY…NGLYAGLHRI (239 aa). An ATP-binding site is contributed by 384–391; the sequence is GPSGSGKT.

The protein belongs to the ABC transporter superfamily. Lipid exporter (TC 3.A.1.106) family. Homodimer.

It is found in the cell inner membrane. The enzyme catalyses ATP + H2O + lipid A-core oligosaccharideSide 1 = ADP + phosphate + lipid A-core oligosaccharideSide 2.. In terms of biological role, involved in lipopolysaccharide (LPS) biosynthesis. Translocates lipid A-core from the inner to the outer leaflet of the inner membrane. Transmembrane domains (TMD) form a pore in the inner membrane and the ATP-binding domain (NBD) is responsible for energy generation. The sequence is that of ATP-dependent lipid A-core flippase from Cupriavidus metallidurans (strain ATCC 43123 / DSM 2839 / NBRC 102507 / CH34) (Ralstonia metallidurans).